A 104-amino-acid polypeptide reads, in one-letter code: Replication restart protein PriB (104 aa).

The region spanning methionine 1–aspartate 101 is the SSB domain.

Belongs to the PriB family. In terms of assembly, homodimer. Interacts with DnaT. Interacts with PriA. Component of the replication restart primosome. Primosome assembly occurs via a 'hand-off' mechanism. PriA binds to replication forks, subsequently PriB then DnaT bind; DnaT then displaces ssDNA to generate the helicase loading substrate.

In terms of biological role, involved in the restart of stalled replication forks, which reloads the replicative helicase on sites far from the origin of replication; the PriA-PriB pathway is the major replication restart pathway. During primosome assembly it facilitates complex formation between PriA and DnaT on DNA; stabilizes PriA on DNA. Stimulates the DNA unwinding activity of PriA helicase. Binds single-stranded (ss)DNA at the primosome assembly site (PAS). One study finds it binds 15 nucleotide (nt) ssDNA. Another study finds the minimal ssDNA length for binding to PriB is 25 nt; prefers dT(30) over dA(30). Also binds 22 nt dsDNA. The polypeptide is Replication restart protein PriB (Klebsiella pneumoniae subsp. pneumoniae (strain ATCC 700721 / MGH 78578)).